A 112-amino-acid polypeptide reads, in one-letter code: Keratin-associated protein 12-4 (112 aa).

Repeat copies occupy residues 10–14 (CPMAC), 20–24 (CVPST), 25–29 (CYPPE), 35–39 (CCCSA), 41–45 (CVALL), 46–50 (CRPLC), 56–60 (CQPAC), 61–65 (CVPSP), 66–70 (CQVAC), 71–75 (CVPVS), 76–80 (CKPVL), 81–85 (CVASF), 86–90 (CPTSG), 91–95 (CCQPF), and 96–100 (CPTLV). A 15 X 5 AA approximate repeats region spans residues 10–100 (CPMACPGSPC…CCQPFCPTLV (91 aa)).

It belongs to the KRTAP type 12 family. Interacts with hair keratins. Restricted to a narrow region of the hair fiber cuticle, lying approximately 20 cell layers above the apex of the dermal papilla of the hair root; not detected in any other tissues.

Functionally, in the hair cortex, hair keratin intermediate filaments are embedded in an interfilamentous matrix, consisting of hair keratin-associated proteins (KRTAP), which are essential for the formation of a rigid and resistant hair shaft through their extensive disulfide bond cross-linking with abundant cysteine residues of hair keratins. The matrix proteins include the high-sulfur and high-glycine-tyrosine keratins. The chain is Keratin-associated protein 12-4 (KRTAP12-4) from Homo sapiens (Human).